The primary structure comprises 787 residues: DNA ligase (787 aa).

Residues 32-36, 81-82, and glutamate 121 contribute to the NAD(+) site; these read DVEYD and SL. Catalysis depends on lysine 123, which acts as the N6-AMP-lysine intermediate. NAD(+)-binding residues include arginine 144, glutamate 181, lysine 297, and lysine 321. The Zn(2+) site is built by cysteine 415, cysteine 418, cysteine 445, and cysteine 451. The region spanning 703–787 is the BRCT domain; that stretch reads VEGLPLAGQT…RLTELGVAVD (85 aa).

The protein belongs to the NAD-dependent DNA ligase family. LigA subfamily. Requires Mg(2+) as cofactor. It depends on Mn(2+) as a cofactor.

It carries out the reaction NAD(+) + (deoxyribonucleotide)n-3'-hydroxyl + 5'-phospho-(deoxyribonucleotide)m = (deoxyribonucleotide)n+m + AMP + beta-nicotinamide D-nucleotide.. DNA ligase that catalyzes the formation of phosphodiester linkages between 5'-phosphoryl and 3'-hydroxyl groups in double-stranded DNA using NAD as a coenzyme and as the energy source for the reaction. It is essential for DNA replication and repair of damaged DNA. This chain is DNA ligase, found in Pseudomonas savastanoi pv. phaseolicola (strain 1448A / Race 6) (Pseudomonas syringae pv. phaseolicola (strain 1448A / Race 6)).